Consider the following 363-residue polypeptide: Peptide chain release factor 1 (363 aa).

Q237 is modified (N5-methylglutamine). A compositionally biased stretch (basic and acidic residues) spans 284-296; the sequence is EDEKRRSAEESTR. A disordered region spans residues 284–305; that stretch reads EDEKRRSAEESTRRSLVASGDR.

It belongs to the prokaryotic/mitochondrial release factor family. Post-translationally, methylated by PrmC. Methylation increases the termination efficiency of RF1.

Its subcellular location is the cytoplasm. Peptide chain release factor 1 directs the termination of translation in response to the peptide chain termination codons UAG and UAA. The chain is Peptide chain release factor 1 from Shewanella baltica (strain OS185).